The primary structure comprises 484 residues: tRNA sulfurtransferase (484 aa).

Positions glutamine 63–glutamine 167 constitute a THUMP domain. ATP is bound by residues leucine 185 to methionine 186, lysine 267, glycine 289, and glutamine 298. Cysteines 346 and 457 form a disulfide. The 79-residue stretch at alanine 405–proline 483 folds into the Rhodanese domain. The active-site Cysteine persulfide intermediate is cysteine 457.

This sequence belongs to the ThiI family.

It localises to the cytoplasm. The catalysed reaction is [ThiI sulfur-carrier protein]-S-sulfanyl-L-cysteine + a uridine in tRNA + 2 reduced [2Fe-2S]-[ferredoxin] + ATP + H(+) = [ThiI sulfur-carrier protein]-L-cysteine + a 4-thiouridine in tRNA + 2 oxidized [2Fe-2S]-[ferredoxin] + AMP + diphosphate. It catalyses the reaction [ThiS sulfur-carrier protein]-C-terminal Gly-Gly-AMP + S-sulfanyl-L-cysteinyl-[cysteine desulfurase] + AH2 = [ThiS sulfur-carrier protein]-C-terminal-Gly-aminoethanethioate + L-cysteinyl-[cysteine desulfurase] + A + AMP + 2 H(+). It functions in the pathway cofactor biosynthesis; thiamine diphosphate biosynthesis. In terms of biological role, catalyzes the ATP-dependent transfer of a sulfur to tRNA to produce 4-thiouridine in position 8 of tRNAs, which functions as a near-UV photosensor. Also catalyzes the transfer of sulfur to the sulfur carrier protein ThiS, forming ThiS-thiocarboxylate. This is a step in the synthesis of thiazole, in the thiamine biosynthesis pathway. The sulfur is donated as persulfide by IscS. The sequence is that of tRNA sulfurtransferase from Pseudomonas syringae pv. tomato (strain ATCC BAA-871 / DC3000).